The following is a 552-amino-acid chain: Olefin beta-lactone synthetase (552 aa).

Residues 182 to 190 (TSGSTGVPK), 316 to 321 (TPYGAT), aspartate 425, and arginine 440 each bind ATP.

The protein belongs to the ATP-dependent AMP-binding enzyme family. Monomer.

The catalysed reaction is a (2R,3S)-2-alkyl-3-hydroxyalkanoate + ATP = a cis-3-alkyl-4-alkyloxetan-2-one + AMP + diphosphate. Its function is as follows. Involved in olefin biosynthesis. Catalyzes the conversion of beta-hydroxy acid substrates to beta-lactones in the presence of ATP. Can use all four stereoisomers of 2-hexyl-3-hydroxydecanoic acid. The polypeptide is Olefin beta-lactone synthetase (Stenotrophomonas maltophilia (strain K279a)).